The primary structure comprises 659 residues: MDIQTRIKELRKQINEANYLYHTKDQPIISDFVYDGLMRELIELETKYPEYDDETSPTKKIGGVVLDAFKKHTHTVPMMSLSNIFNKEELKVFYDRIQKVIPNTSFTTELKIDGLAVTLIYEKGIFKKAATRGNGVVGEDITENVKTIKTLPLQLSKPLDIEVRGEIYMSHKTFKEVNLERANSNLDLFVNPRNAAAGTVRQLDSKVVAKRRLDLFTYTVVGASNFNSTQKETLEFLSELGFPVNPHYKLVDNLDALSDAIDNYDILRKTLPYDTDGVVIKVNQFEHYETIGYTAKYPKYAGAYKFEAEKQITKVEDIIFQVGRTGVITPVAVLTPVFISGSLVSRATLHNEDYILNKDIRIDDQVLVHKAGEIIPEVIEVVLGSRTNQAPFEMVKHCPACESNLVRKQGEADYYCANDNCPGKNVFGLIHFASRAAMDIDTLGEKVVELLHDQTYLQTIPDIYKLHTFKDQLEELPGFGKKKVEKLLNAIEASKMQTLDRLIFGLGIKNVGAKVAKTLLNHYPSITLLADAKYEDLIQIPDIGPEIADSVTTYFSNESNQHMLEELKNLGLQMTYKIDVVTTHPFNGKTFVVTGTLDDFSRTEASDIIEKLGGKVSGSVSKKTDYVLAGKEAGSKLTKALELGIEVMDEATFKVKINE.

NAD(+) contacts are provided by residues 31–35, 80–81, and Glu-109; these read DFVYD and SL. The active-site N6-AMP-lysine intermediate is the Lys-111. NAD(+)-binding residues include Arg-132, Glu-166, Lys-281, and Lys-305. Zn(2+) is bound by residues Cys-398, Cys-401, Cys-416, and Cys-421. The 79-residue stretch at 581 to 659 folds into the BRCT domain; that stretch reads VTTHPFNGKT…EATFKVKINE (79 aa).

This sequence belongs to the NAD-dependent DNA ligase family. LigA subfamily. Mg(2+) serves as cofactor. The cofactor is Mn(2+).

The catalysed reaction is NAD(+) + (deoxyribonucleotide)n-3'-hydroxyl + 5'-phospho-(deoxyribonucleotide)m = (deoxyribonucleotide)n+m + AMP + beta-nicotinamide D-nucleotide.. DNA ligase that catalyzes the formation of phosphodiester linkages between 5'-phosphoryl and 3'-hydroxyl groups in double-stranded DNA using NAD as a coenzyme and as the energy source for the reaction. It is essential for DNA replication and repair of damaged DNA. The chain is DNA ligase from Acholeplasma laidlawii (strain PG-8A).